The primary structure comprises 224 residues: GTP cyclohydrolase 1 (224 aa).

Residues 1–20 (MKQEKTVSPTVENNRSAESR) form a disordered region. Zn(2+) contacts are provided by C114, H117, and C185.

It belongs to the GTP cyclohydrolase I family. In terms of assembly, toroid-shaped homodecamer, composed of two pentamers of five dimers.

The catalysed reaction is GTP + H2O = 7,8-dihydroneopterin 3'-triphosphate + formate + H(+). Its pathway is cofactor biosynthesis; 7,8-dihydroneopterin triphosphate biosynthesis; 7,8-dihydroneopterin triphosphate from GTP: step 1/1. This Chlorobaculum tepidum (strain ATCC 49652 / DSM 12025 / NBRC 103806 / TLS) (Chlorobium tepidum) protein is GTP cyclohydrolase 1.